Reading from the N-terminus, the 392-residue chain is tRNA (guanine-N(7)-)-methyltransferase (392 aa).

Residues glutamate 123, glutamate 148, and aspartate 175 each coordinate S-adenosyl-L-methionine. Substrate-binding residues include lysine 201 and aspartate 231.

It belongs to the class I-like SAM-binding methyltransferase superfamily. TrmB family.

The catalysed reaction is guanosine(46) in tRNA + S-adenosyl-L-methionine = N(7)-methylguanosine(46) in tRNA + S-adenosyl-L-homocysteine. The protein operates within tRNA modification; N(7)-methylguanine-tRNA biosynthesis. Catalyzes the formation of N(7)-methylguanine at position 46 (m7G46) in tRNA. This is tRNA (guanine-N(7)-)-methyltransferase from Campylobacter jejuni subsp. doylei (strain ATCC BAA-1458 / RM4099 / 269.97).